Consider the following 233-residue polypeptide: Lipoprotein-releasing system ATP-binding protein LolD (233 aa).

Residues 6–233 enclose the ABC transporter domain; the sequence is LQCDNLCKRY…TAELSLMGAE (228 aa). Residue 42–49 coordinates ATP; sequence GSSGSGKS.

The protein belongs to the ABC transporter superfamily. Lipoprotein translocase (TC 3.A.1.125) family. As to quaternary structure, the complex is composed of two ATP-binding proteins (LolD) and two transmembrane proteins (LolC and LolE).

It is found in the cell inner membrane. Part of the ABC transporter complex LolCDE involved in the translocation of mature outer membrane-directed lipoproteins, from the inner membrane to the periplasmic chaperone, LolA. Responsible for the formation of the LolA-lipoprotein complex in an ATP-dependent manner. The chain is Lipoprotein-releasing system ATP-binding protein LolD from Escherichia coli O6:K15:H31 (strain 536 / UPEC).